We begin with the raw amino-acid sequence, 354 residues long: Probable protein phosphatase 2C 27 (354 aa).

Residues 54–319 form the PPM-type phosphatase domain; sequence RSGDWSDIGG…DNLTAVMVSF (266 aa). Aspartate 98, glycine 99, aspartate 267, and aspartate 310 together coordinate Mn(2+).

This sequence belongs to the PP2C family. Mg(2+) is required as a cofactor. The cofactor is Mn(2+).

The catalysed reaction is O-phospho-L-seryl-[protein] + H2O = L-seryl-[protein] + phosphate. It carries out the reaction O-phospho-L-threonyl-[protein] + H2O = L-threonyl-[protein] + phosphate. The sequence is that of Probable protein phosphatase 2C 27 from Oryza sativa subsp. japonica (Rice).